Reading from the N-terminus, the 138-residue chain is MTATFLMSMIFGLACGQAMSFCIPTEYMMHVERKECAYCLTINTTVCAGYCMTRDVNGKLFLPKYALSQDVCTYRDFMYKTAEIPGCPRHVTPYFSYPVAISCKCGKCNTDYSDCIHEAIKTNYCTKPQKSYMVGFSI.

Residues 1–20 form the signal peptide; sequence MTATFLMSMIFGLACGQAMS. 6 disulfides stabilise this stretch: Cys-22–Cys-72, Cys-36–Cys-87, Cys-39–Cys-125, Cys-47–Cys-103, Cys-51–Cys-105, and Cys-108–Cys-115. Asn-43 carries an N-linked (GlcNAc...) asparagine glycan. A propeptide spanning residues 133 to 138 is cleaved from the precursor; it reads MVGFSI.

This sequence belongs to the glycoprotein hormones subunit beta family. In terms of assembly, heterodimer of a common alpha chain and a unique beta chain which confers biological specificity to thyrotropin, lutropin, follitropin and gonadotropin.

Its subcellular location is the secreted. Functionally, indispensable for the control of thyroid structure and metabolism. The protein is Thyrotropin subunit beta (TSHB) of Bos taurus (Bovine).